The chain runs to 131 residues: Large ribosomal subunit protein bL17 (131 aa).

This sequence belongs to the bacterial ribosomal protein bL17 family. In terms of assembly, part of the 50S ribosomal subunit. Contacts protein L32.

The chain is Large ribosomal subunit protein bL17 from Azoarcus sp. (strain BH72).